We begin with the raw amino-acid sequence, 180 residues long: Large ribosomal subunit protein uL5 (180 aa).

Belongs to the universal ribosomal protein uL5 family. As to quaternary structure, part of the 50S ribosomal subunit; part of the 5S rRNA/L5/L18/L25 subcomplex. Contacts the 5S rRNA and the P site tRNA. Forms a bridge to the 30S subunit in the 70S ribosome.

Functionally, this is one of the proteins that bind and probably mediate the attachment of the 5S RNA into the large ribosomal subunit, where it forms part of the central protuberance. In the 70S ribosome it contacts protein S13 of the 30S subunit (bridge B1b), connecting the 2 subunits; this bridge is implicated in subunit movement. Contacts the P site tRNA; the 5S rRNA and some of its associated proteins might help stabilize positioning of ribosome-bound tRNAs. This chain is Large ribosomal subunit protein uL5, found in Gloeothece citriformis (strain PCC 7424) (Cyanothece sp. (strain PCC 7424)).